The primary structure comprises 137 residues: Large ribosomal subunit protein uL16 (137 aa).

Positions 1–17 (MLQPKRTKFRKTHKGRN) are enriched in basic residues. The tract at residues 1–23 (MLQPKRTKFRKTHKGRNRGLAQN) is disordered.

It belongs to the universal ribosomal protein uL16 family. Part of the 50S ribosomal subunit.

Its function is as follows. Binds 23S rRNA and is also seen to make contacts with the A and possibly P site tRNAs. This is Large ribosomal subunit protein uL16 from Pseudoalteromonas translucida (strain TAC 125).